A 385-amino-acid chain; its full sequence is Alkanesulfonate monooxygenase (385 aa).

The protein belongs to the SsuD family.

It catalyses the reaction an alkanesulfonate + FMNH2 + O2 = an aldehyde + FMN + sulfite + H2O + 2 H(+). In terms of biological role, catalyzes the desulfonation of aliphatic sulfonates. The polypeptide is Alkanesulfonate monooxygenase (Paraburkholderia phymatum (strain DSM 17167 / CIP 108236 / LMG 21445 / STM815) (Burkholderia phymatum)).